The sequence spans 124 residues: Small ribosomal subunit protein uS11 (124 aa).

The protein belongs to the universal ribosomal protein uS11 family. Part of the 30S ribosomal subunit. Interacts with proteins S7 and S18. Binds to IF-3.

In terms of biological role, located on the platform of the 30S subunit, it bridges several disparate RNA helices of the 16S rRNA. Forms part of the Shine-Dalgarno cleft in the 70S ribosome. The polypeptide is Small ribosomal subunit protein uS11 (Sulfurovum sp. (strain NBC37-1)).